Consider the following 351-residue polypeptide: UDP-3-O-acylglucosamine N-acyltransferase (351 aa).

Residue histidine 240 is the Proton acceptor of the active site.

Belongs to the transferase hexapeptide repeat family. LpxD subfamily. Homotrimer.

The enzyme catalyses a UDP-3-O-[(3R)-3-hydroxyacyl]-alpha-D-glucosamine + a (3R)-hydroxyacyl-[ACP] = a UDP-2-N,3-O-bis[(3R)-3-hydroxyacyl]-alpha-D-glucosamine + holo-[ACP] + H(+). Its pathway is bacterial outer membrane biogenesis; LPS lipid A biosynthesis. In terms of biological role, catalyzes the N-acylation of UDP-3-O-acylglucosamine using 3-hydroxyacyl-ACP as the acyl donor. Is involved in the biosynthesis of lipid A, a phosphorylated glycolipid that anchors the lipopolysaccharide to the outer membrane of the cell. The protein is UDP-3-O-acylglucosamine N-acyltransferase of Pseudomonas fluorescens (strain SBW25).